The sequence spans 259 residues: Ribonuclease HII (259 aa).

One can recognise an RNase H type-2 domain in the interval 70-258; that stretch reads TLIVGIDEVG…VKSLVLGKKE (189 aa). 3 residues coordinate a divalent metal cation: aspartate 76, glutamate 77, and aspartate 168.

The protein belongs to the RNase HII family. Mn(2+) serves as cofactor. Mg(2+) is required as a cofactor.

Its subcellular location is the cytoplasm. The catalysed reaction is Endonucleolytic cleavage to 5'-phosphomonoester.. Its function is as follows. Endonuclease that specifically degrades the RNA of RNA-DNA hybrids. The sequence is that of Ribonuclease HII from Streptococcus pneumoniae (strain ATCC 700669 / Spain 23F-1).